The sequence spans 404 residues: Phosphopentomutase (404 aa).

Mn(2+) is bound by residues D10, D303, H308, D344, H345, and H356.

The protein belongs to the phosphopentomutase family. Mn(2+) serves as cofactor.

The protein resides in the cytoplasm. It catalyses the reaction 2-deoxy-alpha-D-ribose 1-phosphate = 2-deoxy-D-ribose 5-phosphate. The catalysed reaction is alpha-D-ribose 1-phosphate = D-ribose 5-phosphate. The protein operates within carbohydrate degradation; 2-deoxy-D-ribose 1-phosphate degradation; D-glyceraldehyde 3-phosphate and acetaldehyde from 2-deoxy-alpha-D-ribose 1-phosphate: step 1/2. Its function is as follows. Isomerase that catalyzes the conversion of deoxy-ribose 1-phosphate (dRib-1-P) and ribose 1-phosphate (Rib-1-P) to deoxy-ribose 5-phosphate (dRib-5-P) and ribose 5-phosphate (Rib-5-P), respectively. This Shewanella sp. (strain ANA-3) protein is Phosphopentomutase.